Reading from the N-terminus, the 183-residue chain is GTP cyclohydrolase 1 (183 aa).

3 residues coordinate Zn(2+): Cys71, His74, and Cys142.

The protein belongs to the GTP cyclohydrolase I family. Toroid-shaped homodecamer, composed of two pentamers of five dimers.

It catalyses the reaction GTP + H2O = 7,8-dihydroneopterin 3'-triphosphate + formate + H(+). It functions in the pathway cofactor biosynthesis; 7,8-dihydroneopterin triphosphate biosynthesis; 7,8-dihydroneopterin triphosphate from GTP: step 1/1. The chain is GTP cyclohydrolase 1 from Leptospira interrogans serogroup Icterohaemorrhagiae serovar copenhageni (strain Fiocruz L1-130).